A 232-amino-acid chain; its full sequence is MTALGLVLLSMMGYSQHMQQANLGDGVATARLLSRSDWGARLPKSVEHFQGPAPYVIIHHSYMPAVCYSTPDCMKSMRDMQDFHQLERGWNDIGYSFGIGGDGMIYTGRGFNVIGAHAPKYNDKSVGIVLIGDWRTELPPKQMLDAAKNLIAFGVFKGYIDPAYKLLGHRQVRDTECPGGRLFAEISSWPHFTHINDTEGVSSTTAPVVPHVHPQAAAPQKPHQSPPAAPKV.

Residues 1 to 15 form the signal peptide; that stretch reads MTALGLVLLSMMGYS. The N-acetylmuramoyl-L-alanine amidase domain maps to 53-179; sequence APYVIIHHSY…RQVRDTECPG (127 aa). Residue histidine 59 coordinates Zn(2+). A disulfide bridge links cysteine 67 with cysteine 73. Residues histidine 169 and cysteine 177 each contribute to the Zn(2+) site. Asparagine 196 is a glycosylation site (N-linked (GlcNAc...) asparagine). Residues 213-232 are disordered; the sequence is HPQAAAPQKPHQSPPAAPKV.

This sequence belongs to the N-acetylmuramoyl-L-alanine amidase 2 family. In terms of assembly, monomer. Zn(2+) is required as a cofactor. In terms of tissue distribution, widely expressed.

The protein localises to the secreted. It carries out the reaction Hydrolyzes the link between N-acetylmuramoyl residues and L-amino acid residues in certain cell-wall glycopeptides.. In terms of biological role, N-acetylmuramyl-L-alanine amidase involved in innate immunity by degrading bacterial peptidoglycans (PGN). Probably plays a scavenger role by digesting biologically active PGN into biologically inactive fragments. Has no direct bacteriolytic activity. This is Peptidoglycan-recognition protein LB (PGRP-LB) from Drosophila melanogaster (Fruit fly).